We begin with the raw amino-acid sequence, 132 residues long: Cytochrome c-554 (132 aa).

A signal peptide spans 1–24 (MKSISMLTLAASVAFAVTAGQAVA). Residues 26-126 (GDPAAGEKVF…NVWAYLSQFG (101 aa)) enclose the Cytochrome c domain. Residues Cys-38, Cys-41, His-42, and Met-104 each coordinate heme c.

Binds 1 heme c group covalently per subunit.

The protein localises to the periplasm. This is Cytochrome c-554 from Methylosinus trichosporium.